The sequence spans 438 residues: Aspartate--tRNA(Asp/Asn) ligase (438 aa).

L-aspartate is bound at residue Glu176. The aspartate stretch occupies residues Gln198 to Lys201. Arg220 lines the L-aspartate pocket. ATP contacts are provided by residues Arg220–Glu222, Arg228–Leu230, and Glu361. Glu361 and Ser364 together coordinate Mg(2+). L-aspartate contacts are provided by Ser364 and Arg368. Gly409 to Arg412 contacts ATP.

Belongs to the class-II aminoacyl-tRNA synthetase family. Type 2 subfamily. Homodimer. Mg(2+) is required as a cofactor.

It is found in the cytoplasm. It carries out the reaction tRNA(Asx) + L-aspartate + ATP = L-aspartyl-tRNA(Asx) + AMP + diphosphate. In terms of biological role, aspartyl-tRNA synthetase with relaxed tRNA specificity since it is able to aspartylate not only its cognate tRNA(Asp) but also tRNA(Asn). Reaction proceeds in two steps: L-aspartate is first activated by ATP to form Asp-AMP and then transferred to the acceptor end of tRNA(Asp/Asn). In Methanococcus maripaludis (strain C7 / ATCC BAA-1331), this protein is Aspartate--tRNA(Asp/Asn) ligase.